The primary structure comprises 115 residues: NADH-ubiquinone oxidoreductase chain 3 (115 aa).

3 helical membrane-spanning segments follow: residues 3–23, 55–75, and 84–104; these read LIMT…IAFW, FFLV…LLPL, and LTTM…SLAY.

Belongs to the complex I subunit 3 family. In terms of assembly, core subunit of respiratory chain NADH dehydrogenase (Complex I) which is composed of 45 different subunits. Interacts with TMEM186. Interacts with TMEM242.

The protein localises to the mitochondrion inner membrane. The enzyme catalyses a ubiquinone + NADH + 5 H(+)(in) = a ubiquinol + NAD(+) + 4 H(+)(out). Functionally, core subunit of the mitochondrial membrane respiratory chain NADH dehydrogenase (Complex I) which catalyzes electron transfer from NADH through the respiratory chain, using ubiquinone as an electron acceptor. Essential for the catalytic activity of complex I. This is NADH-ubiquinone oxidoreductase chain 3 from Ailurus fulgens (Himalayan red panda).